The following is a 205-amino-acid chain: uncharacterized protein (205 aa).

Active-site charge relay system residues include Ser119 and His160.

The protein belongs to the peptidase S51 family.

This is an uncharacterized protein from Listeria monocytogenes serovar 1/2a (strain ATCC BAA-679 / EGD-e).